A 543-amino-acid polypeptide reads, in one-letter code: Glutamyl-tRNA(Gln) amidotransferase subunit A, chloroplastic/mitochondrial (543 aa).

Residues lysine 123 and serine 198 each act as charge relay system in the active site. Catalysis depends on serine 222, which acts as the Acyl-ester intermediate.

The protein belongs to the amidase family. GatA subfamily. As to quaternary structure, subunit of the heterotrimeric GatCAB amidotransferase (AdT) complex, composed of A, B and C subunits.

The protein resides in the mitochondrion. It is found in the plastid. The protein localises to the chloroplast stroma. The enzyme catalyses L-glutamyl-tRNA(Gln) + L-glutamine + ATP + H2O = L-glutaminyl-tRNA(Gln) + L-glutamate + ADP + phosphate + H(+). Functionally, allows the formation of correctly charged Gln-tRNA(Gln) through the transamidation of misacylated Glu-tRNA(Gln) in chloroplasts and mitochondria. The reaction takes place in the presence of glutamine and ATP through an activated gamma-phospho-Glu-tRNA(Gln). This is Glutamyl-tRNA(Gln) amidotransferase subunit A, chloroplastic/mitochondrial from Oryza sativa subsp. indica (Rice).